Consider the following 71-residue polypeptide: Mitotic-spindle organizing protein 1B (71 aa).

The protein belongs to the MOZART1 family. Homo- and heteromultimer. Part of the gamma-tubulin complex. Interacts with TUBB2/TUBB3, GIP2, GCP3 and TSA1 (via C-terminal domain). Mostly expressed in siliques and flowers, and, to a lower extent, in leaves, roots and seedlings, with highest levels in young tissues and meristematic cells, and the vasculature.

Its subcellular location is the cytoplasm. It is found in the cytoskeleton. The protein localises to the microtubule organizing center. The protein resides in the spindle. It localises to the nucleus. Its subcellular location is the phragmoplast. It is found in the nucleus envelope. Required for gamma-tubulin complex recruitment to the microtubule organizing centers (MTOCs). During mitosis, modulates gamma-tubulin complex localization, spindle stability and chromosomal segregation. Necessary for gametophyte development and embryogenesis. The chain is Mitotic-spindle organizing protein 1B (GIP1) from Arabidopsis thaliana (Mouse-ear cress).